The primary structure comprises 1755 residues: Transposon Ty1-GR3 Gag-Pol polyprotein (1755 aa).

Composition is skewed to polar residues over residues 1–10 (MESQQLSNYP), 48–60 (TKANSQQTTTPAS), and 127–152 (QSQFPQYPSSVGTPLSTPSPESGNTF). 3 disordered regions span residues 1–93 (MESQ…MMTQ), 126–173 (PQSQ…RPPP), and 352–421 (GSRN…SKST). Over residues 153-165 (TDSSSADSDMTST) the composition is skewed to low complexity. Residues 299-401 (NNGIHINNKV…NSKSKTARAH (103 aa)) form an RNA-binding region. The span at 402–418 (NVSTSNNSPSTDNDSIS) shows a compositional bias: low complexity. A Phosphoserine modification is found at Ser-416. Catalysis depends on Asp-461, which acts as the For protease activity; shared with dimeric partner. Positions 583-640 (NVHTSESTRKYPYPFIHRMLAHANAQTIRYSLKNNTITYFNESDVDWSSAIDYQCPDC) are integrase-type zinc finger-like. Residues 660-835 (NSYEPFQYLH…AGLDISTLLP (176 aa)) form the Integrase catalytic domain. Mg(2+) contacts are provided by Asp-671 and Asp-736. The tract at residues 956–1172 (SKAVSPTDST…LGGIGDSNAY (217 aa)) is disordered. Residues 960 to 969 (SPTDSTPPST) are compositionally biased toward low complexity. Composition is skewed to polar residues over residues 1005 to 1015 (STPQISNIEST) and 1031 to 1043 (MSQSNTHESSYAS). Residues 1044–1053 (KSKDFRHSDS) show a composition bias toward basic and acidic residues. Composition is skewed to polar residues over residues 1054-1082 (YSDNETNHTNVPISSTGGTNNKTVPQTSE) and 1095-1106 (SIDTSSSESNSL). The Bipartite nuclear localization signal signature appears at 1178–1212 (KKRSLEDNETEIKVSRDTWNTKNMRSLEPPRSKKR). Residues 1338–1476 (NNYYITQLDI…DILGLEIKYQ (139 aa)) form the Reverse transcriptase Ty1/copia-type domain. Residues Asp-1346, Asp-1427, Asp-1428, Asp-1610, Glu-1652, and Asp-1685 each coordinate Mg(2+). One can recognise an RNase H Ty1/copia-type domain in the interval 1610-1752 (DASYGNQPYY…IKTFKLLTNK (143 aa)).

As to quaternary structure, the capsid protein forms a homotrimer, from which the VLPs are assembled. The protease is a homodimer, whose active site consists of two apposed aspartic acid residues. Post-translationally, initially, virus-like particles (VLPs) are composed of the structural unprocessed proteins Gag and Gag-Pol, and also contain the host initiator methionine tRNA (tRNA(i)-Met) which serves as a primer for minus-strand DNA synthesis, and a dimer of genomic Ty RNA. Processing of the polyproteins occurs within the particle and proceeds by an ordered pathway, called maturation. First, the protease (PR) is released by autocatalytic cleavage of the Gag-Pol polyprotein yielding capsid protein p45 and a Pol-p154 precursor protein. This cleavage is a prerequisite for subsequent processing of Pol-p154 at the remaining sites to release the mature structural and catalytic proteins. Maturation takes place prior to the RT reaction and is required to produce transposition-competent VLPs.

The protein resides in the cytoplasm. Its subcellular location is the nucleus. The catalysed reaction is DNA(n) + a 2'-deoxyribonucleoside 5'-triphosphate = DNA(n+1) + diphosphate. The enzyme catalyses Endonucleolytic cleavage to 5'-phosphomonoester.. Its function is as follows. Capsid protein (CA) is the structural component of the virus-like particle (VLP), forming the shell that encapsulates the retrotransposons dimeric RNA genome. The particles are assembled from trimer-clustered units and there are holes in the capsid shells that allow for the diffusion of macromolecules. CA also has nucleocapsid-like chaperone activity, promoting primer tRNA(i)-Met annealing to the multipartite primer-binding site (PBS), dimerization of Ty1 RNA and initiation of reverse transcription. The aspartyl protease (PR) mediates the proteolytic cleavages of the Gag and Gag-Pol polyproteins after assembly of the VLP. Functionally, reverse transcriptase/ribonuclease H (RT) is a multifunctional enzyme that catalyzes the conversion of the retro-elements RNA genome into dsDNA within the VLP. The enzyme displays a DNA polymerase activity that can copy either DNA or RNA templates, and a ribonuclease H (RNase H) activity that cleaves the RNA strand of RNA-DNA heteroduplexes during plus-strand synthesis and hydrolyzes RNA primers. The conversion leads to a linear dsDNA copy of the retrotransposon that includes long terminal repeats (LTRs) at both ends. In terms of biological role, integrase (IN) targets the VLP to the nucleus, where a subparticle preintegration complex (PIC) containing at least integrase and the newly synthesized dsDNA copy of the retrotransposon must transit the nuclear membrane. Once in the nucleus, integrase performs the integration of the dsDNA into the host genome. The polypeptide is Transposon Ty1-GR3 Gag-Pol polyprotein (TY1B-GR3) (Saccharomyces cerevisiae (strain ATCC 204508 / S288c) (Baker's yeast)).